Consider the following 316-residue polypeptide: Ribosomal RNA large subunit methyltransferase F (316 aa).

This sequence belongs to the methyltransferase superfamily. METTL16/RlmF family.

It localises to the cytoplasm. The catalysed reaction is adenosine(1618) in 23S rRNA + S-adenosyl-L-methionine = N(6)-methyladenosine(1618) in 23S rRNA + S-adenosyl-L-homocysteine + H(+). Specifically methylates the adenine in position 1618 of 23S rRNA. The chain is Ribosomal RNA large subunit methyltransferase F from Pseudomonas putida (strain W619).